Consider the following 201-residue polypeptide: Pyrrolidone-carboxylate peptidase (201 aa).

Residues Glu-78, Cys-141, and His-165 contribute to the active site.

The protein belongs to the peptidase C15 family. As to quaternary structure, homotetramer.

The protein localises to the cytoplasm. The enzyme catalyses Release of an N-terminal pyroglutamyl group from a polypeptide, the second amino acid generally not being Pro.. Functionally, removes 5-oxoproline from various penultimate amino acid residues except L-proline. This is Pyrrolidone-carboxylate peptidase from Brachyspira hyodysenteriae (strain ATCC 49526 / WA1).